Reading from the N-terminus, the 554-residue chain is Glutamine--tRNA ligase (554 aa).

The 'HIGH' region signature appears at 34-44 (PEPNGYLHIGH). ATP contacts are provided by residues 35–37 (EPN) and 41–47 (HIGHAKS). Residues D67 and Y212 each coordinate L-glutamine. ATP is bound by residues T231, 261–262 (RL), and 269–271 (MSK). The 'KMSKS' region motif lies at 268 to 272 (VMSKR). Residues 317 to 324 (TKQDNTIE) form an interaction with tRNA region.

The protein belongs to the class-I aminoacyl-tRNA synthetase family. Monomer.

It is found in the cytoplasm. It carries out the reaction tRNA(Gln) + L-glutamine + ATP = L-glutaminyl-tRNA(Gln) + AMP + diphosphate. This Shigella boydii serotype 18 (strain CDC 3083-94 / BS512) protein is Glutamine--tRNA ligase.